The primary structure comprises 246 residues: Acetoacetyl-CoA reductase (246 aa).

Residues 12 to 14 (GGI) and 88 to 92 (CAGIT) contribute to the NADP(+) site. Residues Asp-94 and 147-150 (QFGQ) each bind substrate. Tyr-153 functions as the Proton acceptor in the catalytic mechanism. NADP(+) is bound at residue 183-186 (PGYV). 184-185 (GY) serves as a coordination point for substrate.

Belongs to the short-chain dehydrogenases/reductases (SDR) family.

The protein resides in the cytoplasm. It catalyses the reaction a (3R)-3-hydroxyacyl-CoA + NADP(+) = a 3-oxoacyl-CoA + NADPH + H(+). The protein operates within biopolymer metabolism; poly-(R)-3-hydroxybutanoate biosynthesis. This chain is Acetoacetyl-CoA reductase, found in Allochromatium vinosum (strain ATCC 17899 / DSM 180 / NBRC 103801 / NCIMB 10441 / D) (Chromatium vinosum).